Reading from the N-terminus, the 312-residue chain is Pantothenate kinase (312 aa).

97-104 (GSVAVGKS) contributes to the ATP binding site.

It belongs to the prokaryotic pantothenate kinase family.

It localises to the cytoplasm. It carries out the reaction (R)-pantothenate + ATP = (R)-4'-phosphopantothenate + ADP + H(+). It functions in the pathway cofactor biosynthesis; coenzyme A biosynthesis; CoA from (R)-pantothenate: step 1/5. The polypeptide is Pantothenate kinase (coaA) (Mycobacterium leprae (strain TN)).